Here is a 121-residue protein sequence, read N- to C-terminus: Holo-[acyl-carrier-protein] synthase (121 aa).

The Mg(2+) site is built by D8 and E58.

The protein belongs to the P-Pant transferase superfamily. AcpS family. In terms of assembly, homotrimer. The cofactor is Mg(2+).

It is found in the cytoplasm. It catalyses the reaction apo-[ACP] + CoA = holo-[ACP] + adenosine 3',5'-bisphosphate + H(+). Transfers the 4'-phosphopantetheine moiety from coenzyme A to a Ser of fatty acid acyl-carrier-protein ACP. Also modifies the D-alanyl carrier protein but fails to recognize PCP and AcpK, an acyl carrier protein of secondary metabolism. The sequence is that of Holo-[acyl-carrier-protein] synthase from Bacillus subtilis (strain 168).